Here is a 346-residue protein sequence, read N- to C-terminus: Protein tas (346 aa).

Residue Tyr-53 is the Proton donor of the active site. 234 to 244 (SCLGFGTLTGK) contacts NADP(+).

It belongs to the aldo/keto reductase family. Aldo/keto reductase 2 subfamily.

This chain is Protein tas (tas), found in Escherichia coli (strain K12).